Reading from the N-terminus, the 305-residue chain is Axin interactor, dorsalization-associated protein B (305 aa).

A compositionally biased stretch (acidic residues) spans 126 to 137 (ENLEVEEEEEDG). The interval 126–146 (ENLEVEEEEEDGGAGAGSPDL) is disordered. The segment at 153–220 (GTLLPRLPSE…RKEDTYVHFN (68 aa)) is axin-binding. In terms of domain architecture, C2 Aida-type spans 156 to 303 (LPRLPSEPGM…LYLHLLQTLL (148 aa)).

The protein belongs to the AIDA family.

In terms of biological role, acts as a ventralizing factor during embryogenesis. Inhibits axin-mediated JNK activation by binding axin and disrupting axin homodimerization. This in turn antagonizes a Wnt/beta-catenin-independent dorsalization pathway activated by axin/JNK-signaling. This is Axin interactor, dorsalization-associated protein B (aida-b) from Xenopus laevis (African clawed frog).